We begin with the raw amino-acid sequence, 448 residues long: Adenylosuccinate synthetase (448 aa).

Residues 36–42 and 64–66 each bind GTP; these read GDEGKGK and GHT. Asp-37 (proton acceptor) is an active-site residue. 2 residues coordinate Mg(2+): Asp-37 and Gly-64. IMP contacts are provided by residues 37-40, 62-65, Thr-154, Arg-168, Asn-246, Thr-261, and Arg-325; these read DEGK and NAGH. Catalysis depends on His-65, which acts as the Proton donor. 321–327 contacts substrate; that stretch reads VTTKRKR. GTP-binding positions include Arg-327, 353–355, and 436–438; these read KLD and GVG.

Belongs to the adenylosuccinate synthetase family. Homodimer. The cofactor is Mg(2+).

The protein localises to the cytoplasm. It catalyses the reaction IMP + L-aspartate + GTP = N(6)-(1,2-dicarboxyethyl)-AMP + GDP + phosphate + 2 H(+). It participates in purine metabolism; AMP biosynthesis via de novo pathway; AMP from IMP: step 1/2. Its function is as follows. Plays an important role in the de novo pathway and in the salvage pathway of purine nucleotide biosynthesis. Catalyzes the first committed step in the biosynthesis of AMP from IMP. This chain is Adenylosuccinate synthetase, found in Drosophila persimilis (Fruit fly).